A 283-amino-acid chain; its full sequence is Energy-coupling factor transporter ATP-binding protein EcfA1 (283 aa).

In terms of domain architecture, ABC transporter spans 7 to 244; that stretch reads VEFRHVSFTY…PELLQEIGLD (238 aa). ATP is bound at residue 41-48; it reads GHNGSGKS.

Belongs to the ABC transporter superfamily. Energy-coupling factor EcfA family. Forms a stable energy-coupling factor (ECF) transporter complex composed of 2 membrane-embedded substrate-binding proteins (S component), 2 ATP-binding proteins (A component) and 2 transmembrane proteins (T component).

The protein localises to the cell membrane. In terms of biological role, ATP-binding (A) component of a common energy-coupling factor (ECF) ABC-transporter complex. Unlike classic ABC transporters this ECF transporter provides the energy necessary to transport a number of different substrates. This Lactobacillus acidophilus (strain ATCC 700396 / NCK56 / N2 / NCFM) protein is Energy-coupling factor transporter ATP-binding protein EcfA1.